The following is a 227-amino-acid chain: MNSINIAIDGPASSGKSTVAKIIAKNLNYTYLDTGAMYRCATYLALQHGYEAQDVSKILGLLAERPISFGKAEDGSQTVFIGTEEVTLAIRQNDVTNNVSWVSAIPEIREELVNQQRRIAKDGAIIMDGRDIGTVVLPDAELKIFLVASVDERAERRFKENQEKGIESDFETLKSEIAARDYKDSHREVSPLKAAEDAIEFDTTGVSIEGVVTFIQEKAEKIIDMKN.

10-18 is an ATP binding site; sequence GPASSGKST.

The protein belongs to the cytidylate kinase family. Type 1 subfamily.

It is found in the cytoplasm. It carries out the reaction CMP + ATP = CDP + ADP. The enzyme catalyses dCMP + ATP = dCDP + ADP. This Streptococcus agalactiae serotype III (strain NEM316) protein is Cytidylate kinase.